Consider the following 196-residue polypeptide: Charged multivesicular body protein 1a (196 aa).

M1 is subject to N-acetylmethionine. The stretch at 5–42 (LFQLKFTAKQLEKLAKKAEKDSKAEQAKVKKALQQKNV) forms a coiled coil. Residue S101 is modified to Phosphoserine. Residues 102–124 (AMDLQKVSAVMDRFEQQVQNLDV) are a coiled coil. S173 bears the Phosphoserine mark. Residues 185–195 (DQLSRRLAALR) carry the MIT-interacting motif motif.

Belongs to the SNF7 family. As to quaternary structure, probable peripherally associated component of the endosomal sorting required for transport complex III (ESCRT-III). ESCRT-III components are thought to multimerize to form a flat lattice on the perimeter membrane of the endosome. Several assembly forms of ESCRT-III may exist that interact and act sequentially. Self-associates. Interacts with CHMP1B. Interacts with VPS4A. Interacts with VPS4B. Interacts with PHF1. Interacts with IST1. Interacts with MITD1. As to expression, highly expressed in adult heart, kidney and liver. Expressed at lower levels in adult colon, spleen, lung, brain, testis and muscle. Also expressed in myoblasts and embryo fibroblasts.

It is found in the cytoplasm. The protein localises to the endosome membrane. The protein resides in the nucleus matrix. In terms of biological role, probable peripherally associated component of the endosomal sorting required for transport complex III (ESCRT-III) which is involved in multivesicular bodies (MVBs) formation and sorting of endosomal cargo proteins into MVBs. MVBs contain intraluminal vesicles (ILVs) that are generated by invagination and scission from the limiting membrane of the endosome and mostly are delivered to lysosomes enabling degradation of membrane proteins, such as stimulated growth factor receptors, lysosomal enzymes and lipids. The MVB pathway appears to require the sequential function of ESCRT-O, -I,-II and -III complexes. ESCRT-III proteins mostly dissociate from the invaginating membrane before the ILV is released. The ESCRT machinery also functions in topologically equivalent membrane fission events, such as the terminal stages of cytokinesis. ESCRT-III proteins are believed to mediate the necessary vesicle extrusion and/or membrane fission activities, possibly in conjunction with the AAA ATPase VPS4. Involved in cytokinesis. Involved in recruiting VPS4A and/or VPS4B to the midbody of dividing cells. May also be involved in chromosome condensation. Targets the Polycomb group (PcG) protein BMI1/PCGF4 to regions of condensed chromatin. May play a role in stable cell cycle progression and in PcG gene silencing. The polypeptide is Charged multivesicular body protein 1a (Chmp1a) (Mus musculus (Mouse)).